A 328-amino-acid polypeptide reads, in one-letter code: 5,10-methylenetetrahydromethanopterin reductase (328 aa).

It belongs to the mer family.

Its subcellular location is the cytoplasm. The enzyme catalyses 5-methyl-5,6,7,8-tetrahydromethanopterin + oxidized coenzyme F420-(gamma-L-Glu)(n) + H(+) = 5,10-methylenetetrahydromethanopterin + reduced coenzyme F420-(gamma-L-Glu)(n). It functions in the pathway one-carbon metabolism; methanogenesis from CO(2); methyl-coenzyme M from 5,10-methylene-5,6,7,8-tetrahydromethanopterin: step 1/2. Catalyzes the reversible reduction of methylene-H(4)MPT to methyl-H(4)MPT. This Methanosarcina acetivorans (strain ATCC 35395 / DSM 2834 / JCM 12185 / C2A) protein is 5,10-methylenetetrahydromethanopterin reductase.